Reading from the N-terminus, the 225-residue chain is Protein LiaH (225 aa).

Coiled-coil stretches lie at residues 58-151 and 161-182; these read KKYE…KEHM and ESAY…IRAN.

This sequence belongs to the PspA/Vipp/IM30 family.

This Bacillus subtilis (strain 168) protein is Protein LiaH (liaH).